Here is a 230-residue protein sequence, read N- to C-terminus: D-glycero-alpha-D-manno-heptose 1-phosphate guanylyltransferase (230 aa).

Belongs to the D-alpha-D-heptose-1-P guanylyltransferase family.

The enzyme catalyses D-glycero-alpha-D-manno-heptose 1-phosphate + GTP + H(+) = GDP-D-glycero-alpha-D-manno-heptose + diphosphate. Its pathway is nucleotide-sugar biosynthesis; GDP-D-glycero-alpha-D-manno-heptose biosynthesis; GDP-D-glycero-alpha-D-manno-heptose from D-glycero-alpha-D-manno-heptose 7-phosphate: step 3/3. It functions in the pathway cell surface structure biogenesis; S-layer biogenesis. Functionally, catalyzes the GDP transfer from GTP to D-glycero-alpha-D-manno-heptose 1-phosphate, yielding GDP-D-alpha-D-heptose. Cannot use ATP, CTP, dTTP or UTP as substrate. The chain is D-glycero-alpha-D-manno-heptose 1-phosphate guanylyltransferase (hddC) from Aneurinibacillus thermoaerophilus.